A 93-amino-acid chain; its full sequence is Small ribosomal subunit protein uS19 (93 aa).

It belongs to the universal ribosomal protein uS19 family.

Its function is as follows. Protein S19 forms a complex with S13 that binds strongly to the 16S ribosomal RNA. This chain is Small ribosomal subunit protein uS19, found in Lactobacillus helveticus (strain DPC 4571).